Reading from the N-terminus, the 556-residue chain is Protein trichome birefringence-like 1 (556 aa).

Residues 38 to 58 traverse the membrane as a helical; Signal-anchor for type II membrane protein segment; the sequence is TFVYAFVVTFVALTVFLAFSP. The short motif at 269-271 is the GDS motif element; that stretch reads GDS. Positions 514–528 match the DCXHWCLPGXXDXWN motif motif; that stretch reads DCSHWCLPGVPDSWN.

Belongs to the PC-esterase family. TBL subfamily. Not expressed in trichomes.

It is found in the membrane. Functionally, can complement TBR and is therefore functionally equivalent, but may work in different tissue. May act as a bridging protein that binds pectin and other cell wall polysaccharides. Probably involved in maintaining esterification of pectins. May be involved in the specific O-acetylation of cell wall polymers. The sequence is that of Protein trichome birefringence-like 1 (TBL1) from Arabidopsis thaliana (Mouse-ear cress).